The following is a 269-amino-acid chain: MKRSDRYSNSNEHFEHMKHEPHYNTYYQPVGKPPKKKKSKRILLKILLTILIIIALFIGIMYFLSTRDNVDELRKIENKSSFVSADNMPEYVKGAFISMEDERFYNHHGFDLKGTTRALFSTISDRDVQGGSTITQQVVKNYFYDNDRSFTRKVKELFVAHRVEKQYNKNEILSFYLNNIYFGDNQYTLEGAANHYFGTTVNKNSTTMSHITVLQSAILASKVNAPSVYNINNMSENFTQRVSTNLEKMKQQNYINETQYQQAMSQLNR.

The helical transmembrane segment at 46–66 (ILLTILIIIALFIGIMYFLST) threads the bilayer.

This sequence belongs to the glycosyltransferase 51 family.

The protein localises to the cell membrane. It catalyses the reaction [GlcNAc-(1-&gt;4)-Mur2Ac(oyl-L-Ala-gamma-D-Glu-L-Lys-D-Ala-D-Ala)](n)-di-trans,octa-cis-undecaprenyl diphosphate + beta-D-GlcNAc-(1-&gt;4)-Mur2Ac(oyl-L-Ala-gamma-D-Glu-L-Lys-D-Ala-D-Ala)-di-trans,octa-cis-undecaprenyl diphosphate = [GlcNAc-(1-&gt;4)-Mur2Ac(oyl-L-Ala-gamma-D-Glu-L-Lys-D-Ala-D-Ala)](n+1)-di-trans,octa-cis-undecaprenyl diphosphate + di-trans,octa-cis-undecaprenyl diphosphate + H(+). Its pathway is cell wall biogenesis; peptidoglycan biosynthesis. Peptidoglycan polymerase that catalyzes glycan chain elongation using lipid-linked disaccharide-pentapeptide as the substrate. The protein is Monofunctional glycosyltransferase of Staphylococcus aureus (strain Newman).